The following is a 161-amino-acid chain: Cyclic pyranopterin monophosphate synthase (161 aa).

Substrate is bound by residues 75-77 (LCH) and 113-114 (ME). Aspartate 128 is a catalytic residue.

The protein belongs to the MoaC family. In terms of assembly, homohexamer; trimer of dimers.

The catalysed reaction is (8S)-3',8-cyclo-7,8-dihydroguanosine 5'-triphosphate = cyclic pyranopterin phosphate + diphosphate. Its pathway is cofactor biosynthesis; molybdopterin biosynthesis. Its function is as follows. Catalyzes the conversion of (8S)-3',8-cyclo-7,8-dihydroguanosine 5'-triphosphate to cyclic pyranopterin monophosphate (cPMP). The chain is Cyclic pyranopterin monophosphate synthase from Edwardsiella ictaluri (strain 93-146).